We begin with the raw amino-acid sequence, 888 residues long: Alanine--tRNA ligase (888 aa).

Zn(2+) contacts are provided by His564, His568, Cys676, and His680.

The protein belongs to the class-II aminoacyl-tRNA synthetase family. The cofactor is Zn(2+).

The protein resides in the cytoplasm. The enzyme catalyses tRNA(Ala) + L-alanine + ATP = L-alanyl-tRNA(Ala) + AMP + diphosphate. Functionally, catalyzes the attachment of alanine to tRNA(Ala) in a two-step reaction: alanine is first activated by ATP to form Ala-AMP and then transferred to the acceptor end of tRNA(Ala). Also edits incorrectly charged Ser-tRNA(Ala) and Gly-tRNA(Ala) via its editing domain. This is Alanine--tRNA ligase from Bartonella tribocorum (strain CIP 105476 / IBS 506).